The chain runs to 129 residues: Small ribosomal subunit protein uS11 (129 aa).

Belongs to the universal ribosomal protein uS11 family. As to quaternary structure, part of the 30S ribosomal subunit. Interacts with proteins S7 and S18. Binds to IF-3.

Located on the platform of the 30S subunit, it bridges several disparate RNA helices of the 16S rRNA. Forms part of the Shine-Dalgarno cleft in the 70S ribosome. This chain is Small ribosomal subunit protein uS11, found in Bradyrhizobium sp. (strain BTAi1 / ATCC BAA-1182).